A 270-amino-acid chain; its full sequence is Formamidopyrimidine-DNA glycosylase (270 aa).

Pro2 functions as the Schiff-base intermediate with DNA in the catalytic mechanism. Glu3 (proton donor) is an active-site residue. Lys57 (proton donor; for beta-elimination activity) is an active-site residue. Residues His90, Arg109, and Lys150 each contribute to the DNA site. The FPG-type zinc finger occupies 235-269; it reads LVYGNKDKPCPRCGTKIKSIIIGQRNSFFCPQCQK. Residue Arg259 is the Proton donor; for delta-elimination activity of the active site.

It belongs to the FPG family. As to quaternary structure, monomer. Zn(2+) serves as cofactor.

It catalyses the reaction Hydrolysis of DNA containing ring-opened 7-methylguanine residues, releasing 2,6-diamino-4-hydroxy-5-(N-methyl)formamidopyrimidine.. The catalysed reaction is 2'-deoxyribonucleotide-(2'-deoxyribose 5'-phosphate)-2'-deoxyribonucleotide-DNA = a 3'-end 2'-deoxyribonucleotide-(2,3-dehydro-2,3-deoxyribose 5'-phosphate)-DNA + a 5'-end 5'-phospho-2'-deoxyribonucleoside-DNA + H(+). Its function is as follows. Involved in base excision repair of DNA damaged by oxidation or by mutagenic agents. Acts as a DNA glycosylase that recognizes and removes damaged bases. Has a preference for oxidized purines, such as 7,8-dihydro-8-oxoguanine (8-oxoG). Has AP (apurinic/apyrimidinic) lyase activity and introduces nicks in the DNA strand. Cleaves the DNA backbone by beta-delta elimination to generate a single-strand break at the site of the removed base with both 3'- and 5'-phosphates. The sequence is that of Formamidopyrimidine-DNA glycosylase from Histophilus somni (strain 129Pt) (Haemophilus somnus).